We begin with the raw amino-acid sequence, 207 residues long: dITP/XTP pyrophosphatase (207 aa).

7 to 12 (SNNAKK) serves as a coordination point for substrate. Catalysis depends on aspartate 72, which acts as the Proton acceptor. Aspartate 72 is a Mg(2+) binding site. Substrate is bound by residues serine 73, 155-158 (FGYD), lysine 183, and 188-189 (HR).

It belongs to the HAM1 NTPase family. As to quaternary structure, homodimer. Mg(2+) serves as cofactor.

The catalysed reaction is XTP + H2O = XMP + diphosphate + H(+). It catalyses the reaction dITP + H2O = dIMP + diphosphate + H(+). The enzyme catalyses ITP + H2O = IMP + diphosphate + H(+). Pyrophosphatase that catalyzes the hydrolysis of nucleoside triphosphates to their monophosphate derivatives, with a high preference for the non-canonical purine nucleotides XTP (xanthosine triphosphate), dITP (deoxyinosine triphosphate) and ITP. Seems to function as a house-cleaning enzyme that removes non-canonical purine nucleotides from the nucleotide pool, thus preventing their incorporation into DNA/RNA and avoiding chromosomal lesions. This is dITP/XTP pyrophosphatase from Corynebacterium diphtheriae (strain ATCC 700971 / NCTC 13129 / Biotype gravis).